A 274-amino-acid polypeptide reads, in one-letter code: Orotidine 5'-phosphate decarboxylase (274 aa).

Lys-96 (proton donor) is an active-site residue.

The protein belongs to the OMP decarboxylase family. Type 2 subfamily.

The enzyme catalyses orotidine 5'-phosphate + H(+) = UMP + CO2. Its pathway is pyrimidine metabolism; UMP biosynthesis via de novo pathway; UMP from orotate: step 2/2. The protein is Orotidine 5'-phosphate decarboxylase of Bacteroides fragilis (strain YCH46).